A 302-amino-acid polypeptide reads, in one-letter code: Sulfate adenylyltransferase subunit 2 (302 aa).

This sequence belongs to the PAPS reductase family. CysD subfamily. In terms of assembly, heterodimer composed of CysD, the smaller subunit, and CysN.

The enzyme catalyses sulfate + ATP + H(+) = adenosine 5'-phosphosulfate + diphosphate. Its pathway is sulfur metabolism; hydrogen sulfide biosynthesis; sulfite from sulfate: step 1/3. Functionally, with CysN forms the ATP sulfurylase (ATPS) that catalyzes the adenylation of sulfate producing adenosine 5'-phosphosulfate (APS) and diphosphate, the first enzymatic step in sulfur assimilation pathway. APS synthesis involves the formation of a high-energy phosphoric-sulfuric acid anhydride bond driven by GTP hydrolysis by CysN coupled to ATP hydrolysis by CysD. The sequence is that of Sulfate adenylyltransferase subunit 2 from Shewanella halifaxensis (strain HAW-EB4).